The sequence spans 392 residues: Isocitrate dehydrogenase [NAD] subunit gamma, mitochondrial (392 aa).

Residues 1–39 (MALKVATAAGGAVKAALRPALLWRPWEVLGSHEAPRRSF) constitute a mitochondrion transit peptide. Residues Thr119 and Asn132 each contribute to the citrate site. Substrate is bound by residues Arg135, Arg166, and Asp253. Asp253 provides a ligand contact to Mn(2+). Asn311, Thr312, and Asn323 together coordinate ADP.

Belongs to the isocitrate and isopropylmalate dehydrogenases family. In terms of assembly, heterooligomer of subunits alpha (IDH3A), beta (IDH3B), and gamma (IDH3G) in the apparent ratio of 2:1:1. The heterodimer containing one IDH3A and one IDH3B subunit and the heterodimer containing one IDH3A and one IDH3G subunit assemble into a heterotetramer (which contains two subunits of IDH3A, one of IDH3B and one of IDH3G) and further into the heterooctamer. Mg(2+) serves as cofactor. The cofactor is Mn(2+).

It localises to the mitochondrion. Its activity is regulated as follows. The heterotetramer and the heterodimer composed of IDH3A and IDH3G subunits can be allosterically activated by citrate (CIT) or/and ADP, and the two activators can act independently or synergistically. The heterodimer composed of IDH3A and IDH3B subunits cannot be allosterically regulated and the allosteric regulation of the heterotetramer is through the IDH3G subunit and not the IDH3B subunit. The IDH3G subunit contains the allosteric site which consists of a CIT-binding site and an ADP-binding site, and the binding of CIT and ADP causes conformational changes at the allosteric site which are transmitted to the active site in the catalytic subunit (IDH3A) through a cascade of conformational changes at the heterodimer interface, leading to stabilization of the isocitrate-binding at the active site and thus activation of the enzyme. ATP can activate the heterotetramer and the heterodimer composed of IDH3A and IDH3G subunits at low concentrations but inhibits their activities at high concentrations, whereas ATP exhibits only inhibitory effect on the heterodimer composed of IDH3A and IDH3B subunits. Functionally, regulatory subunit which plays a role in the allosteric regulation of the enzyme catalyzing the decarboxylation of isocitrate (ICT) into alpha-ketoglutarate. The heterodimer composed of the alpha (IDH3A) and beta (IDH3B) subunits and the heterodimer composed of the alpha (IDH3A) and gamma (IDH3G) subunits, have considerable basal activity but the full activity of the heterotetramer (containing two subunits of IDH3A, one of IDH3B and one of IDH3G) requires the assembly and cooperative function of both heterodimers. The polypeptide is Isocitrate dehydrogenase [NAD] subunit gamma, mitochondrial (IDH3G) (Bos taurus (Bovine)).